Here is a 785-residue protein sequence, read N- to C-terminus: Probably inactive leucine-rich repeat receptor-like protein kinase At5g58150 (785 aa).

The signal sequence occupies residues 1–21; the sequence is MRLSLWGSLLFFSFFVKHLTS. Residues 22 to 436 are Extracellular-facing; that stretch reads LDPNTDAYHL…KVNKKNTGLK (415 aa). LRR repeat units lie at residues 64-88, 89-112, 114-136, 138-160, 161-184, 186-208, 210-232, 236-258, 259-283, 284-306, 307-330, 331-355, 357-377, and 379-405; these read SENV…TIGK, MSKL…LWSL, LLES…IGNF, SLHT…ISNL, VNLT…LVHC, SLLS…FGSA, PLLK…VLHE, TVDL…HKHN, WSSL…LSSA, HKLG…EIGK, LSAL…EISR, LSHL…SVKN, EVLD…LLEK, and AMMQ…TIQR. N119 carries N-linked (GlcNAc...) asparagine glycosylation. N-linked (GlcNAc...) asparagine glycans are attached at residues N162, N198, N216, and N258. N-linked (GlcNAc...) asparagine glycans are attached at residues N314, N319, and N343. 3 N-linked (GlcNAc...) asparagine glycosylation sites follow: N385, N390, and N397. The helical transmembrane segment at 437-457 threads the bilayer; the sequence is IGLGLAISMAFLLIGLLLILV. The Cytoplasmic portion of the chain corresponds to 458–785; that stretch reads ALRVRRKSRT…GLLKDISPNY (328 aa). T510 and T518 each carry phosphothreonine. Positions 521-785 constitute a Protein kinase domain; sequence FDRGTMLWEG…GLLKDISPNY (265 aa). ATP contacts are provided by residues 527-535 and K549; that span reads LWEGKSGPT. 2 positions are modified to phosphotyrosine: Y594 and Y683.

The protein belongs to the protein kinase superfamily. Ser/Thr protein kinase family.

It localises to the cell membrane. This chain is Probably inactive leucine-rich repeat receptor-like protein kinase At5g58150, found in Arabidopsis thaliana (Mouse-ear cress).